Consider the following 245-residue polypeptide: Epoxyqueuosine reductase QueH (245 aa).

[4Fe-4S] cluster contacts are provided by Cys52, Cys53, Cys131, and Cys134. Cysteines 214 and 216 form a disulfide.

The protein belongs to the QueH family.

The enzyme catalyses epoxyqueuosine(34) in tRNA + AH2 = queuosine(34) in tRNA + A + H2O. Its pathway is tRNA modification; tRNA-queuosine biosynthesis. In terms of biological role, catalyzes the conversion of epoxyqueuosine (oQ) to queuosine (Q), which is a hypermodified base found in the wobble positions of tRNA(Asp), tRNA(Asn), tRNA(His) and tRNA(Tyr). The sequence is that of Epoxyqueuosine reductase QueH from Haemophilus influenzae (strain ATCC 51907 / DSM 11121 / KW20 / Rd).